Here is a 459-residue protein sequence, read N- to C-terminus: Hypotaurine/taurine--pyruvate aminotransferase (459 aa).

Position 287 is an N6-(pyridoxal phosphate)lysine (K287).

This sequence belongs to the class-III pyridoxal-phosphate-dependent aminotransferase family. The cofactor is pyridoxal 5'-phosphate.

It catalyses the reaction hypotaurine + pyruvate = 2-sulfinoacetaldehyde + L-alanine. It carries out the reaction taurine + pyruvate = sulfoacetaldehyde + L-alanine. Its pathway is organosulfur degradation. Converts hypotaurine to alanine and sulfinoacetaldehyde, which desulfinates spontaneously to acetaldehyde and sulfite. Can also catalyze the degradation of taurine into alanine and sulfoacetaldehyde, which is stable. Has 2-fold higher aminotransferase activity with hypotaurine as the substrate. The sequence is that of Hypotaurine/taurine--pyruvate aminotransferase from Paracoccus denitrificans (strain Pd 1222).